A 185-amino-acid polypeptide reads, in one-letter code: Ribosome maturation factor RimM (185 aa).

One can recognise a PRC barrel domain in the interval 105 to 184 (KDEYYWKDII…IVVVDWEIYK (80 aa)).

Belongs to the RimM family. In terms of assembly, binds ribosomal protein uS19.

The protein localises to the cytoplasm. An accessory protein needed during the final step in the assembly of 30S ribosomal subunit, possibly for assembly of the head region. Essential for efficient processing of 16S rRNA. May be needed both before and after RbfA during the maturation of 16S rRNA. It has affinity for free ribosomal 30S subunits but not for 70S ribosomes. This chain is Ribosome maturation factor RimM, found in Blochmanniella floridana.